The primary structure comprises 409 residues: Immediate early response gene 5-like protein (409 aa).

Disordered stretches follow at residues 168 to 237 (QPPH…PSSS) and 312 to 335 (GQEE…GGTP). Over residues 184–195 (QPGPAPLPPPAP) the composition is skewed to pro residues. 2 stretches are compositionally biased toward low complexity: residues 196–212 (AALC…CSAP) and 220–237 (PPTV…PSSS). Residues 313-324 (QEEEDDEEEDAG) are compositionally biased toward acidic residues.

This sequence belongs to the IER family.

The protein is Immediate early response gene 5-like protein (Ier5l) of Rattus norvegicus (Rat).